A 162-amino-acid polypeptide reads, in one-letter code: Sorting nexin-12 (162 aa).

Residues 1–20 (MSDTAVADTRRLNSKPQDLT) form a disordered region. Ser2 carries the post-translational modification N-acetylserine. Tyr23 carries the phosphotyrosine modification. A PX domain is found at 28–152 (NFLEIDIFNP…HMFLQEEAID (125 aa)). A 1,2-diacyl-sn-glycero-3-phospho-(1D-myo-inositol-3-phosphate) contacts are provided by Arg71, Ser73, Lys96, and Arg119. A Phosphoserine modification is found at Ser73.

It belongs to the sorting nexin family.

It is found in the membrane. Its function is as follows. May be involved in several stages of intracellular trafficking. The polypeptide is Sorting nexin-12 (SNX12) (Homo sapiens (Human)).